Reading from the N-terminus, the 313-residue chain is Porphobilinogen deaminase (313 aa).

Cysteine 242 bears the S-(dipyrrolylmethanemethyl)cysteine mark.

Belongs to the HMBS family. Monomer. The cofactor is dipyrromethane.

The catalysed reaction is 4 porphobilinogen + H2O = hydroxymethylbilane + 4 NH4(+). It functions in the pathway porphyrin-containing compound metabolism; protoporphyrin-IX biosynthesis; coproporphyrinogen-III from 5-aminolevulinate: step 2/4. Tetrapolymerization of the monopyrrole PBG into the hydroxymethylbilane pre-uroporphyrinogen in several discrete steps. In Escherichia coli O6:H1 (strain CFT073 / ATCC 700928 / UPEC), this protein is Porphobilinogen deaminase.